Here is a 148-residue protein sequence, read N- to C-terminus: Large-conductance mechanosensitive channel (148 aa).

2 helical membrane-spanning segments follow: residues 12 to 32 and 85 to 105; these read AFAM…GGAF and GQFL…FLFI.

This sequence belongs to the MscL family. In terms of assembly, homopentamer.

The protein resides in the cell inner membrane. In terms of biological role, channel that opens in response to stretch forces in the membrane lipid bilayer. May participate in the regulation of osmotic pressure changes within the cell. This is Large-conductance mechanosensitive channel from Bacteroides thetaiotaomicron (strain ATCC 29148 / DSM 2079 / JCM 5827 / CCUG 10774 / NCTC 10582 / VPI-5482 / E50).